Here is a 68-residue protein sequence, read N- to C-terminus: Disintegrin EMF10B (68 aa).

The region spanning 1 to 68 is the Disintegrin domain; sequence ELLQNSGNPC…SDCPRNPVFK (68 aa). Cystine bridges form between Cys10/Cys33, Cys24/Cys30, Cys29/Cys54, and Cys42/Cys61. The Cell attachment site; atypical (MGD) signature appears at 46 to 48; that stretch reads MGD.

This sequence belongs to the venom metalloproteinase (M12B) family. P-II subfamily. P-IIe sub-subfamily. In terms of assembly, heterodimer with EMF10A; disulfide-linked. As to expression, expressed by the venom gland.

The protein resides in the secreted. Its function is as follows. Extremely potent and selective inhibitor of integrin alpha-5/beta-1 (ITGA5/ITGB1). Partially inhibits adhesion of cells expressing alpha-IIb/beta-3 (ITGA2B/ITGB3), alpha-V/beta-3 (ITGAV/ITGB3), and alpha-4/beta-1 (ITGA4/ITGB1) to appropriate ligands only at concentration higher than 500 nM. Weakly inhibits ADP-induced platelet aggregation. The sequence is that of Disintegrin EMF10B from Eristicophis macmahoni (Leaf-nosed viper).